We begin with the raw amino-acid sequence, 325 residues long: LIM and senescent cell antigen-like-containing domain protein 1 (325 aa).

A2 is subject to N-acetylalanine. LIM zinc-binding domains follow at residues 10–62 (CERC…CEHD), 71–121 (CHQC…CRPC), 135–184 (CQKC…CLPC), 193–243 (CGAC…CETH), and 252–303 (CFHC…CKKC).

As to quaternary structure, component of the heterotrimeric IPP (ILK-PINCH-PARVIN) complex composed of ILK, LIMS1/PINCH and PARVA; the complex binds to F-actin via the C-terminal tail of LIMS1 and the N-terminal region of PARVA, promoting F-actin filament bundling. Formation of the IPP complex is dependent on protein kinase C and precedes integrin-mediated cell adhesion and spreading. Competes with LIMS2 for interaction with ILK. Interacts with SH3/SH2 adapter NCK2, thereby linking the complex to cell surface receptors. Interacts (via LIM zinc-binding 5) with TGFB1I1.

Its subcellular location is the cell junction. It is found in the focal adhesion. The protein localises to the cell membrane. Within the IPP (ILK-PINCH-PARVIN) complex, binds to F-actin, promoting F-actin bundling, a process required to generate force for actin cytoskeleton reorganization and subsequent dynamic cell adhesion events such as cell spreading and migration. The polypeptide is LIM and senescent cell antigen-like-containing domain protein 1 (Lims1) (Mus musculus (Mouse)).